The chain runs to 589 residues: Serine/threonine-protein phosphatase 2A 65 kDa regulatory subunit A alpha isoform (589 aa).

Alanine 2 carries the post-translational modification N-acetylalanine. 15 HEAT repeats span residues 8-46 (DSLYPIAVLIDELRNEDVQLRLNSIKKLSTIALALGVER), 47-84 (TRSELLPFLTDTIYDEDEVLLALAEQLGTFTTLVGGPE), 85-123 (YVHCLLPPLESLATVEETVVRDKAVESLRAISHEHSPSD), 124-161 (LEAHFVPLVKRLAGGDWFTSRTSACGLFSVCYPRVSSA), 162-200 (VKAELRQYFRNLCSDDTPMVRRAAASKLGEFAKVLELDN), 201-239 (VKSEIIPMFSNLASDEQDSVRLLAVEACVNIAQLLPQED), 240-278 (LEALVMPTLRQAAEDKSWRVRYMVADKFTELQKAVGPEI), 279-321 (TKTD…RENV), 322-360 (IMTQILPCIKELVSDANQHVKSALASVIMGLSPILGKDN), 361-399 (TIEHLLPLFLAQLKDECPEVRLNIISNLDCVNEVIGIRQ), 400-438 (LSQSLLPAIVELAEDAKWRVRLAIIEYMPLLAGQLGVEF), 439-477 (FDEKLNSLCMAWLVDHVYAIREAATSNLKKLVEKFGKEW), 478-516 (AHATIIPKVLAMSGDPNYLHRMTTLFCINVLSEVCGQDI), 517-555 (TTKHMLPTVLRMAGDPVANVRFNVAKSLQKIGPILDNST), and 556-589 (LQSEVKPILEKLTQDQDVDVKYFAQEALTVLSLA). Lysine 280 bears the N6-acetyllysine mark.

Belongs to the phosphatase 2A regulatory subunit A family. As to quaternary structure, PP2A consists of a common heterodimeric core enzyme, composed of PPP2CA a 36 kDa catalytic subunit (subunit C) and PPP2R1A a 65 kDa constant regulatory subunit (PR65 or subunit A), that associates with a variety of regulatory subunits. Proteins that associate with the core dimer include three families of regulatory subunits B (the R2/B/PR55/B55, R3/B''/PR72/PR130/PR59 and R5/B'/B56 families), the 48 kDa variable regulatory subunit, viral proteins, and cell signaling molecules. Found in a complex with at least ARL2, PPP2CB, PPP2R1A, PPP2R2A, PPP2R5E and TBCD. Interacts with the PP2A C catalytic subunit PPP2CA. Interacts with the PP2A B subunit PPP2R2A. Interacts with the PP2A B subunit PPP2R5D. Interacts with FOXO1; the interaction dephosphorylates FOXO1 on AKT-mediated phosphorylation sites. Interacts with IPO9. Interacts with TP53 and SGO1. Interacts with PLA2G16; this interaction might decrease PP2A activity. Interacts with CTTNBP2NL. Interacts with GNA12; the interaction promotes protein phosphatase 2A activation causing dephosphorylation of MAPT. Interacts with CIP2A; this interaction stabilizes CIP2A. Interacts with PABIR1/FAM122A. Interacts with ADCY8; antagonizes interaction between ADCY8 and calmodulin. Interacts with CRTC3 (when phosphorylated at 'Ser-391'). Interacts with SPRY2. Part of the core of STRIPAK complexes composed of PP2A catalytic and scaffolding subunits, the striatins (PP2A regulatory subunits), the striatin-associated proteins MOB4, STRIP1 and STRIP2, PDCD10 and members of the STE20 kinases, such as STK24 and STK26. Component of the Integrator-PP2A (INTAC) complex, composed of the Integrator core complex and protein phosphatase 2A subunits PPP2CA and PPP2R1A.

It localises to the cytoplasm. It is found in the nucleus. The protein localises to the chromosome. Its subcellular location is the centromere. The protein resides in the lateral cell membrane. It localises to the cell projection. It is found in the dendrite. Its function is as follows. The PR65 subunit of protein phosphatase 2A serves as a scaffolding molecule to coordinate the assembly of the catalytic subunit and a variable regulatory B subunit. Upon interaction with GNA12 promotes dephosphorylation of microtubule associated protein TAU/MAPT. Required for proper chromosome segregation and for centromeric localization of SGO1 in mitosis. Together with RACK1 adapter, mediates dephosphorylation of AKT1 at 'Ser-473', preventing AKT1 activation and AKT-mTOR signaling pathway. Dephosphorylation of AKT1 is essential for regulatory T-cells (Treg) homeostasis and stability. Part of the striatin-interacting phosphatase and kinase (STRIPAK) complexes. STRIPAK complexes have critical roles in protein (de)phosphorylation and are regulators of multiple signaling pathways including Hippo, MAPK, nuclear receptor and cytoskeleton remodeling. Different types of STRIPAK complexes are involved in a variety of biological processes such as cell growth, differentiation, apoptosis, metabolism and immune regulation. Key mediator of a quality checkpoint during transcription elongation as part of the Integrator-PP2A (INTAC) complex. The INTAC complex drives premature transcription termination of transcripts that are unfavorably configured for transcriptional elongation: within the INTAC complex, acts as a scaffolding subunit for PPP2CA, which catalyzes dephosphorylation of the C-terminal domain (CTD) of Pol II subunit POLR2A/RPB1 and SUPT5H/SPT5, thereby preventing transcriptional elongation. Regulates the recruitment of the SKA complex to kinetochores. In Mus musculus (Mouse), this protein is Serine/threonine-protein phosphatase 2A 65 kDa regulatory subunit A alpha isoform (Ppp2r1a).